Consider the following 184-residue polypeptide: Ribosome-recycling factor (184 aa).

Belongs to the RRF family.

The protein resides in the cytoplasm. Responsible for the release of ribosomes from messenger RNA at the termination of protein biosynthesis. May increase the efficiency of translation by recycling ribosomes from one round of translation to another. This is Ribosome-recycling factor from Acinetobacter baumannii (strain SDF).